We begin with the raw amino-acid sequence, 178 residues long: Large ribosomal subunit protein uL6 (178 aa).

Belongs to the universal ribosomal protein uL6 family. In terms of assembly, part of the 50S ribosomal subunit.

Functionally, this protein binds to the 23S rRNA, and is important in its secondary structure. It is located near the subunit interface in the base of the L7/L12 stalk, and near the tRNA binding site of the peptidyltransferase center. The sequence is that of Large ribosomal subunit protein uL6 from Francisella tularensis subsp. mediasiatica (strain FSC147).